The sequence spans 433 residues: Xylose isomerase (433 aa).

Residues His-99 and Asp-102 contribute to the active site. Residues Glu-230, Glu-266, His-269, Asp-294, Asp-305, Asp-307, and Asp-337 each contribute to the Mg(2+) site.

This sequence belongs to the xylose isomerase family. As to quaternary structure, homotetramer. It depends on Mg(2+) as a cofactor.

It localises to the cytoplasm. The catalysed reaction is alpha-D-xylose = alpha-D-xylulofuranose. This Cereibacter sphaeroides (strain ATCC 17029 / ATH 2.4.9) (Rhodobacter sphaeroides) protein is Xylose isomerase.